We begin with the raw amino-acid sequence, 39 residues long: Contryphan-Cal4 (39 aa).

A signal peptide spans 1-20 (MTRTAVLLLTLLFLVAMAAS). Cys-29 and Cys-35 are oxidised to a cystine.

As to expression, expressed by the venom duct.

Its subcellular location is the secreted. Probable neurotoxin. The sequence is that of Contryphan-Cal4 from Californiconus californicus (California cone).